The chain runs to 476 residues: Doublesex- and mab-3-related transcription factor 3 (476 aa).

Residues 29 to 76 (CARCRNHGVLSWLKGHKRYCRFKDCTCEKCILIIERQRVMAAQVALRR) constitute a DNA-binding region (DM). 2 disordered regions span residues 89–130 (DSLR…RPTA) and 147–195 (GTLP…SKNC). Over residues 102-121 (DAAATAATASQSSPASQASQ) the composition is skewed to low complexity. The segment covering 165–174 (DSSSTDNTAE) has biased composition (polar residues). Over residues 176–185 (FSDKDTDQRS) the composition is skewed to basic and acidic residues. The DMA domain occupies 255–290 (RPPLEVLKKIFPNQKPTVLELILKGCGGDLVSAVEV). Residues 418–432 (NSTSVFRSSPVLSSR) show a composition bias toward polar residues. The interval 418–476 (NSTSVFRSSPVLSSRTTEDPRISIPDDGCPIVTKQSIYTEDDYDERSDSSDSRILNTSS) is disordered.

Belongs to the DMRT family. As to expression, expressed in the ventral spinal cord, in a restrical population of neurons migrating ventrically in the developing spinal cord at 11.5 dpc.

It localises to the nucleus. Its function is as follows. Probable transcription factor that plays a role in configuring the spinal circuits controlling stride in vertebrates. Involved in neuronal specification within specific subdivision of spinal cord neurons and in the development of a coordinated locomotor network controlling limb movements. May regulate transcription during sexual development. This Mus musculus (Mouse) protein is Doublesex- and mab-3-related transcription factor 3 (Dmrt3).